We begin with the raw amino-acid sequence, 286 residues long: UDP-3-O-acyl-N-acetylglucosamine deacetylase (286 aa).

The Zn(2+) site is built by histidine 79, histidine 237, and aspartate 241. The active-site Proton donor is histidine 264.

It belongs to the LpxC family. Requires Zn(2+) as cofactor.

It catalyses the reaction a UDP-3-O-[(3R)-3-hydroxyacyl]-N-acetyl-alpha-D-glucosamine + H2O = a UDP-3-O-[(3R)-3-hydroxyacyl]-alpha-D-glucosamine + acetate. The protein operates within glycolipid biosynthesis; lipid IV(A) biosynthesis; lipid IV(A) from (3R)-3-hydroxytetradecanoyl-[acyl-carrier-protein] and UDP-N-acetyl-alpha-D-glucosamine: step 2/6. In terms of biological role, catalyzes the hydrolysis of UDP-3-O-myristoyl-N-acetylglucosamine to form UDP-3-O-myristoylglucosamine and acetate, the committed step in lipid A biosynthesis. This Chlamydia trachomatis serovar A (strain ATCC VR-571B / DSM 19440 / HAR-13) protein is UDP-3-O-acyl-N-acetylglucosamine deacetylase.